The primary structure comprises 506 residues: ATP synthase subunit alpha (506 aa).

Residue 172 to 179 (GDRKTGKT) participates in ATP binding.

The protein belongs to the ATPase alpha/beta chains family. In terms of assembly, F-type ATPases have 2 components, CF(1) - the catalytic core - and CF(0) - the membrane proton channel. CF(1) has five subunits: alpha(3), beta(3), gamma(1), delta(1), epsilon(1). CF(0) has three main subunits: a(1), b(2) and c(9-12). The alpha and beta chains form an alternating ring which encloses part of the gamma chain. CF(1) is attached to CF(0) by a central stalk formed by the gamma and epsilon chains, while a peripheral stalk is formed by the delta and b chains.

Its subcellular location is the cell membrane. The catalysed reaction is ATP + H2O + 4 H(+)(in) = ADP + phosphate + 5 H(+)(out). Its function is as follows. Produces ATP from ADP in the presence of a proton gradient across the membrane. The alpha chain is a regulatory subunit. The polypeptide is ATP synthase subunit alpha (Lactobacillus gasseri (strain ATCC 33323 / DSM 20243 / BCRC 14619 / CIP 102991 / JCM 1131 / KCTC 3163 / NCIMB 11718 / NCTC 13722 / AM63)).